The chain runs to 80 residues: U4-theraphotoxin-Spl1a (80 aa).

A signal peptide spans 1-21 (MKASLFAVIFGLVVLCACSFA). Residues 22-50 (EDQFASPNELLKSMFVESTHELTPEVEGR) constitute a propeptide that is removed on maturation. Intrachain disulfides connect Cys52–Cys66, Cys59–Cys71, and Cys65–Cys75. Leu79 is subject to Leucine amide.

The protein belongs to the neurotoxin 30 (phrixotoxin) family. In terms of tissue distribution, expressed by the venom gland.

The protein localises to the secreted. Functionally, probable ion channel inhibitor. Shows insecticidal activity when injected into mealworms. The chain is U4-theraphotoxin-Spl1a from Selenotypus plumipes (Australian featherleg tarantula).